Here is a 183-residue protein sequence, read N- to C-terminus: Glutathione-regulated potassium-efflux system ancillary protein KefG (183 aa).

This sequence belongs to the NAD(P)H dehydrogenase (quinone) family. KefG subfamily. Interacts with KefB.

The protein localises to the cell inner membrane. The enzyme catalyses a quinone + NADH + H(+) = a quinol + NAD(+). The catalysed reaction is a quinone + NADPH + H(+) = a quinol + NADP(+). Functionally, regulatory subunit of a potassium efflux system that confers protection against electrophiles. Required for full activity of KefB. This chain is Glutathione-regulated potassium-efflux system ancillary protein KefG, found in Shigella flexneri serotype 5b (strain 8401).